A 1456-amino-acid polypeptide reads, in one-letter code: Putative 1-phosphatidylinositol-3-phosphate 5-kinase FAB1D (1456 aa).

The span at 1–19 (MTPSNSLSSSERSLSGECS) shows a compositional bias: low complexity. 6 disordered regions span residues 1-110 (MTPS…EVDG), 533-592 (PVSV…NDIE), 925-944 (ENDN…TPLV), 967-987 (VPED…TSPI), 1003-1022 (NGQE…DDEV), and 1137-1159 (NNQD…TNRL). Over residues 43–57 (ELTKEVKVDRLERKS) the composition is skewed to basic and acidic residues. Residues 86-110 (REDDSDDVPVWEPPEPENPEDEVDG) are compositionally biased toward acidic residues. Residues 533 to 544 (PVSVDTDVSTTS) are compositionally biased toward low complexity. Polar residues predominate over residues 973–987 (SQTLCSSSPDTTSPI). The PIPK domain maps to 1115–1443 (NNEESKKPLS…RFRKFMKTHF (329 aa)). The span at 1150–1159 (RFSSESTNRL) shows a compositional bias: polar residues.

As to quaternary structure, component of the PI(3,5)P2 regulatory complex at least composed of ATG18, SAC/FIG4, FAB1 and VAC14. It depends on Mg(2+) as a cofactor. Requires Mn(2+) as cofactor.

It catalyses the reaction a 1,2-diacyl-sn-glycero-3-phospho-(1D-myo-inositol-3-phosphate) + ATP = a 1,2-diacyl-sn-glycero-3-phospho-(1D-myo-inositol-3,5-bisphosphate) + ADP + H(+). The PI(3,5)P2 regulatory complex regulates both the synthesis and turnover of phosphatidylinositol 3,5-bisphosphate (PtdIns(3,5)P2). Catalyzes the phosphorylation of phosphatidylinositol 3-phosphate on the fifth hydroxyl of the myo-inositol ring, to form phosphatidylinositol 3,5-bisphosphate. In Arabidopsis thaliana (Mouse-ear cress), this protein is Putative 1-phosphatidylinositol-3-phosphate 5-kinase FAB1D (FAB1D).